The following is a 136-amino-acid chain: T-cell receptor alpha chain constant (136 aa).

Positions 19 to 103 (STLCLFTDFD…LTEKSFETDM (85 aa)) constitute an Ig-like C1-type domain. A disulfide bridge connects residues Cys-22 and Cys-72. Residues Asn-66, Asn-80, and Asn-109 are each glycosylated (N-linked (GlcNAc...) asparagine). The segment at 90-111 (CDATLTEKSFETDMNLNFQNLS) is connecting peptide. A helical transmembrane segment spans residues 111–131 (SVMGLRILLLKVAGFNLLMTL). The Cytoplasmic portion of the chain corresponds to 132 to 136 (RLWSS).

As to quaternary structure, alpha-beta TR is a heterodimer composed of an alpha and beta chain; disulfide-linked. The alpha-beta TR is associated with the transmembrane signaling CD3 coreceptor proteins to form the TR-CD3 (TcR or TCR). The assembly of alpha-beta TR heterodimers with CD3 occurs in the endoplasmic reticulum where a single alpha-beta TR heterodimer associates with one CD3D-CD3E heterodimer, one CD3G-CD3E heterodimer and one CD247 homodimer forming a stable octameric structure. CD3D-CD3E and CD3G-CD3E heterodimers preferentially associate with TR alpha and TR beta chains, respectively. The association of the CD247 homodimer is the last step of TcR assembly in the endoplasmic reticulum and is required for transport to the cell surface.

It localises to the cell membrane. Constant region of T cell receptor (TR) alpha chain. Alpha-beta T cell receptors are antigen specific receptors which are essential to the immune response and are present on the cell surface of T lymphocytes. Recognize peptide-major histocompatibility (MH) (pMH) complexes that are displayed by antigen presenting cells (APC), a prerequisite for efficient T cell adaptive immunity against pathogens. Binding of alpha-beta TR to pMH complex initiates TR-CD3 clustering on the cell surface and intracellular activation of LCK that phosphorylates the ITAM motifs of CD3G, CD3D, CD3E and CD247 enabling the recruitment of ZAP70. In turn, ZAP70 phosphorylates LAT, which recruits numerous signaling molecules to form the LAT signalosome. The LAT signalosome propagates signal branching to three major signaling pathways, the calcium, the mitogen-activated protein kinase (MAPK) kinase and the nuclear factor NF-kappa-B (NF-kB) pathways, leading to the mobilization of transcription factors that are critical for gene expression and essential for T cell growth and differentiation. The T cell repertoire is generated in the thymus, by V-(D)-J rearrangement. This repertoire is then shaped by intrathymic selection events to generate a peripheral T cell pool of self-MH restricted, non-autoaggressive T cells. Post-thymic interaction of alpha-beta TR with the pMH complexes shapes TR structural and functional avidity. The protein is T-cell receptor alpha chain constant of Mus musculus (Mouse).